The following is a 352-amino-acid chain: DNA polymerase IV (352 aa).

The region spanning valine 3–glycine 187 is the UmuC domain. Residues aspartate 7 and aspartate 105 each contribute to the Mg(2+) site. Glutamate 106 is an active-site residue.

This sequence belongs to the DNA polymerase type-Y family. In terms of assembly, monomer. Interacts with the PCNA heterotrimer via PCNA1. It depends on Mg(2+) as a cofactor.

It is found in the cytoplasm. It catalyses the reaction DNA(n) + a 2'-deoxyribonucleoside 5'-triphosphate = DNA(n+1) + diphosphate. Its function is as follows. Poorly processive, error-prone DNA polymerase involved in untargeted mutagenesis. Copies undamaged DNA at stalled replication forks, which arise in vivo from mismatched or misaligned primer ends. These misaligned primers can be extended by PolIV. Exhibits no 3'-5' exonuclease (proofreading) activity. It is involved in translesional synthesis. This chain is DNA polymerase IV (dbh), found in Saccharolobus solfataricus (strain ATCC 35092 / DSM 1617 / JCM 11322 / P2) (Sulfolobus solfataricus).